A 636-amino-acid polypeptide reads, in one-letter code: Threonine--tRNA ligase (636 aa).

Positions 1-60 constitute a TGS domain; the sequence is MPIINFNNKEILFNYPISIIEIIKKFDKNLSENCIAAKINGKLLDVSEIINYDGSLELVK. Residues 242–533 are catalytic; sequence DHRKIGKKLD…ITEEFSGKYP (292 aa). Cys-333, His-384, and His-510 together coordinate Zn(2+).

This sequence belongs to the class-II aminoacyl-tRNA synthetase family. As to quaternary structure, homodimer. It depends on Zn(2+) as a cofactor.

The protein localises to the cytoplasm. The enzyme catalyses tRNA(Thr) + L-threonine + ATP = L-threonyl-tRNA(Thr) + AMP + diphosphate + H(+). Its function is as follows. Catalyzes the attachment of threonine to tRNA(Thr) in a two-step reaction: L-threonine is first activated by ATP to form Thr-AMP and then transferred to the acceptor end of tRNA(Thr). Also edits incorrectly charged L-seryl-tRNA(Thr). The sequence is that of Threonine--tRNA ligase from Wigglesworthia glossinidia brevipalpis.